Consider the following 680-residue polypeptide: Fermitin family homolog 2 (680 aa).

Residues 40 to 81 form an interaction with membranes containing phosphatidylinositol phosphate region; it reads HIGGVMLKLVEKLDVKKDWSDHALWWEKKRTWLLKTHWTLDK. A disordered region spans residues 141 to 162; it reads LKKPRDPTKKKKKKLDDQSEDE. Phosphoserine is present on residues Ser-159, Ser-181, Ser-339, and Ser-351. One can recognise an FERM domain in the interval 189-661; it reads MTPTYDAHDG…GYIFLSTRAK (473 aa). The region spanning 380-476 is the PH domain; the sequence is KVFKPKKLTL…WMAACRLASK (97 aa). Residue Lys-383 participates in a 1,2-diacyl-sn-glycero-3-phospho-(1D-myo-inositol-3,4,5-trisphosphate) binding. Phosphoserine is present on Ser-666.

This sequence belongs to the kindlin family. As to quaternary structure, interacts with ITGB1; the interaction is inhibited in presence of ITGB1BP1. Interacts with FBLIM1. Interacts with active, unphosphorylated CTNNB1. Identified in a complex with CTNNB1 and TCF7L2/TCF4. Interacts with ILK, ITGB1 and ITGB3. As to expression, detected in adult heart muscle (at protein level). Detected in heart, skeletal muscle and testis.

The protein resides in the cytoplasm. The protein localises to the cell cortex. Its subcellular location is the cytoskeleton. It is found in the stress fiber. It localises to the cell junction. The protein resides in the focal adhesion. The protein localises to the membrane. Its subcellular location is the cell projection. It is found in the lamellipodium membrane. It localises to the nucleus. The protein resides in the myofibril. The protein localises to the sarcomere. Its subcellular location is the i band. It is found in the cell surface. Functionally, scaffolding protein that enhances integrin activation mediated by TLN1 and/or TLN2, but activates integrins only weakly by itself. Binds to membranes enriched in phosphoinositides. Enhances integrin-mediated cell adhesion onto the extracellular matrix and cell spreading; this requires both its ability to interact with integrins and with phospholipid membranes. Required for the assembly of focal adhesions. Participates in the connection between extracellular matrix adhesion sites and the actin cytoskeleton and also in the orchestration of actin assembly and cell shape modulation. Recruits FBLIM1 to focal adhesions. Plays a role in the TGFB1 and integrin signaling pathways. Stabilizes active CTNNB1 and plays a role in the regulation of transcription mediated by CTNNB1 and TCF7L2/TCF4 and in Wnt signaling. This Mus musculus (Mouse) protein is Fermitin family homolog 2 (Fermt2).